Here is a 563-residue protein sequence, read N- to C-terminus: Arginine--tRNA ligase (563 aa).

A 'HIGH' region motif is present at residues 120-130; it reads PNIAKPFHVGH.

It belongs to the class-I aminoacyl-tRNA synthetase family. In terms of assembly, monomer.

The protein localises to the cytoplasm. It catalyses the reaction tRNA(Arg) + L-arginine + ATP = L-arginyl-tRNA(Arg) + AMP + diphosphate. The polypeptide is Arginine--tRNA ligase (Clostridium beijerinckii (strain ATCC 51743 / NCIMB 8052) (Clostridium acetobutylicum)).